A 269-amino-acid polypeptide reads, in one-letter code: Lipid II flippase Amj (269 aa).

Transmembrane regions (helical) follow at residues 1 to 21 (MHVI…IHSI), 31 to 51 (SGAR…MVIV), 84 to 104 (FLIF…PSFV), 105 to 125 (ALFS…FQVF), 161 to 181 (LFVI…SALY), 192 to 212 (TAVM…AIFV), and 245 to 265 (VAGT…IAWL).

Belongs to the Amj family.

It localises to the cell membrane. The protein operates within cell wall biogenesis; peptidoglycan biosynthesis. Involved in peptidoglycan biosynthesis. Transports lipid-linked peptidoglycan precursors from the inner to the outer leaflet of the cytoplasmic membrane. May serve as a defense mechanism against naturally occurring MurJ antagonists. The polypeptide is Lipid II flippase Amj (Bacillus subtilis (strain 168)).